Consider the following 351-residue polypeptide: Large ribosomal subunit protein uL3 (351 aa).

2 disordered regions span residues 1–31 (MGHR…TPRT) and 246–271 (KGSR…GQLG).

This sequence belongs to the universal ribosomal protein uL3 family. In terms of assembly, part of the 50S ribosomal subunit. Forms a cluster with proteins L14 and L24e.

In terms of biological role, one of the primary rRNA binding proteins, it binds directly near the 3'-end of the 23S rRNA, where it nucleates assembly of the 50S subunit. In Saccharolobus islandicus (strain M.16.27) (Sulfolobus islandicus), this protein is Large ribosomal subunit protein uL3.